A 208-amino-acid chain; its full sequence is Thymidylate kinase (208 aa).

9–16 (GGEGCGKS) contributes to the ATP binding site.

Belongs to the thymidylate kinase family.

The catalysed reaction is dTMP + ATP = dTDP + ADP. Phosphorylation of dTMP to form dTDP in both de novo and salvage pathways of dTTP synthesis. This is Thymidylate kinase from Dehalococcoides mccartyi (strain ATCC BAA-2100 / JCM 16839 / KCTC 5957 / BAV1).